The following is a 245-amino-acid chain: Uridylate kinase (245 aa).

Residue 18 to 21 (KLSG) coordinates ATP. Position 60 (glycine 60) interacts with UMP. ATP is bound by residues glycine 61 and arginine 65. UMP-binding positions include aspartate 80 and 141–148 (TGNPFFTT). The ATP site is built by threonine 168, tyrosine 174, and aspartate 177.

The protein belongs to the UMP kinase family. In terms of assembly, homohexamer.

Its subcellular location is the cytoplasm. It carries out the reaction UMP + ATP = UDP + ADP. It participates in pyrimidine metabolism; CTP biosynthesis via de novo pathway; UDP from UMP (UMPK route): step 1/1. Inhibited by UTP. In terms of biological role, catalyzes the reversible phosphorylation of UMP to UDP. This Pseudomonas aeruginosa (strain UCBPP-PA14) protein is Uridylate kinase.